The primary structure comprises 133 residues: Small ribosomal subunit protein uS8 (133 aa).

The protein belongs to the universal ribosomal protein uS8 family. In terms of assembly, part of the 30S ribosomal subunit. Contacts proteins S5 and S12.

One of the primary rRNA binding proteins, it binds directly to 16S rRNA central domain where it helps coordinate assembly of the platform of the 30S subunit. This Cyanothece sp. (strain PCC 7425 / ATCC 29141) protein is Small ribosomal subunit protein uS8.